The following is a 453-amino-acid chain: MASVIEQCQVVPSPGSATELTLPLTYFDHVWLAFHRMRRILFYKLPISRPDFVQTIIPTLKDSLSLTLKYYLPLAGNVACPQDWSGYPELRYVTGNSVSVIFSESDMDFNYLIGYHPRNTKDFYHFVPQLAEPKDAPGVQLAPVLAIQVTLFPNHGISIGFTNHHVAGDGATIVKFVRAWALLNKFGGDEQFLANEFIPFYDRSVIKDPNGVGMSIWNEMKKYKHMMKMSDVVTPPDKVRGTFIITRHDIGKLKNLVLTRRPKLTHVTSFTVTCAYVWTCIIKSEAATGEEIDENGMEFFGCAADCRAQFNPPLPPSYFGNALVGYVARTRQVDLAGKEGFTIAVELIGEAIRKRMKDEEWILSGSWFKEYDKVDAKRSLSVAGSPKLDLYAADFGWGRPEKLEFVSIDNDDGISMSLSKSKDSDGDLEIGLSLSKTRMNAFAAMFTHGISFL.

The active-site Proton acceptor is the histidine 165. The short motif at 165 to 169 is the HXXXD motif element; it reads HVAGD. Malonyl-CoA-binding positions include lysine 254, histidine 266, and 268-269; that span reads TS. Catalysis depends on aspartate 394, which acts as the Proton acceptor. The DFGWG motif motif lies at 394-398; it reads DFGWG.

This sequence belongs to the plant acyltransferase family. Phenolic glucoside malonyltransferase subfamily. As to quaternary structure, monomer. As to expression, highly expressed in flower. Also expressed in flower bud, stem, root and leaf.

It catalyses the reaction a flavonol 3-O-beta-D-glucoside + malonyl-CoA = a flavonol 3-O-(6-O-malonyl-beta-D-glucoside) + CoA. The enzyme catalyses a flavonol 7-O-beta-D-glucoside + malonyl-CoA = a flavonol 7-O-(6-O-malonyl-beta-D-glucoside) + CoA. Functionally, malonyltransferase with broad substrate specificity acting on phenolic glucosides including xenobiotic naphthols. Has activity against flavonoid 7-O-glucosides, flavonoid 3-O-glucosides and naphthol glucosides, and to a lesser extent against coumarin glucosides in vitro. Prefers malonyl-CoA as an acyl donor, but also active with succinyl-CoA and methylmalonyl-CoA, but not with acetyl-CoA. The polypeptide is Phenolic glucoside malonyltransferase 1 (Nicotiana tabacum (Common tobacco)).